A 209-amino-acid chain; its full sequence is Ribonuclease HII (209 aa).

The 190-residue stretch at 19-208 (GLVAGVDEAG…VARALQAPVA (190 aa)) folds into the RNase H type-2 domain. Residues Asp25, Glu26, and Asp117 each contribute to the a divalent metal cation site.

Belongs to the RNase HII family. Mn(2+) serves as cofactor. Requires Mg(2+) as cofactor.

It localises to the cytoplasm. The enzyme catalyses Endonucleolytic cleavage to 5'-phosphomonoester.. Endonuclease that specifically degrades the RNA of RNA-DNA hybrids. This is Ribonuclease HII from Acidovorax ebreus (strain TPSY) (Diaphorobacter sp. (strain TPSY)).